The following is a 290-amino-acid chain: Pirin (290 aa).

Histidine 56, histidine 58, histidine 101, and glutamate 103 together coordinate Fe cation.

This sequence belongs to the pirin family. May interact with NF1/CTF1. Interacts with BCL3. Identified in a complex comprised of PIR, BLC3, NFKB1 and target DNA. The cofactor is Fe cation. Highly expressed in a subset of melanomas. Detected at very low levels in most tissues (at protein level). Expressed in all tissues, with highest level of expression in heart and liver.

It is found in the nucleus. The protein resides in the cytoplasm. The catalysed reaction is quercetin + O2 = 2-(3,4-dihydroxybenzoyloxy)-4,6-dihydroxybenzoate + CO. Its pathway is flavonoid metabolism; quercetin degradation. Its activity is regulated as follows. Inhibited by kojic acid, sodium diethyldithiocarbamate and 1,10-phenanthroline monohydrochloride. Its function is as follows. Transcriptional coregulator of NF-kappa-B which facilitates binding of NF-kappa-B proteins to target kappa-B genes in a redox-state-dependent manner. May be required for efficient terminal myeloid maturation of hematopoietic cells. Has quercetin 2,3-dioxygenase activity (in vitro). The sequence is that of Pirin (PIR) from Homo sapiens (Human).